The sequence spans 106 residues: ATP-dependent Clp protease adapter protein ClpS (106 aa).

Belongs to the ClpS family. In terms of assembly, binds to the N-terminal domain of the chaperone ClpA.

Functionally, involved in the modulation of the specificity of the ClpAP-mediated ATP-dependent protein degradation. This Yersinia enterocolitica serotype O:8 / biotype 1B (strain NCTC 13174 / 8081) protein is ATP-dependent Clp protease adapter protein ClpS.